A 181-amino-acid polypeptide reads, in one-letter code: Glucose-1-phosphate adenylyltransferase large subunit 2 (181 aa).

It belongs to the bacterial/plant glucose-1-phosphate adenylyltransferase family. In terms of assembly, heterotetramer. As to expression, leaves.

It localises to the plastid. Its subcellular location is the chloroplast. It is found in the amyloplast. The catalysed reaction is alpha-D-glucose 1-phosphate + ATP + H(+) = ADP-alpha-D-glucose + diphosphate. It participates in glycan biosynthesis; starch biosynthesis. Its activity is regulated as follows. Highly active without 3'phosphoglycerate, and is only slightly affected by the activator 3'phosphoglycerate and inhibitor orthophosphate. Its function is as follows. This protein plays a role in synthesis of starch. It catalyzes the synthesis of the activated glycosyl donor, ADP-glucose from Glc-1-P and ATP. The chain is Glucose-1-phosphate adenylyltransferase large subunit 2 from Hordeum vulgare (Barley).